Consider the following 331-residue polypeptide: Neuropeptides B/W receptor type 1 (331 aa).

The Extracellular portion of the chain corresponds to 1 to 43; that stretch reads MHNASYWGPERANTSCPAPAPTLGCPNASGPAPPLPPPLAVAV. Asparagine 3, asparagine 13, and asparagine 27 each carry an N-linked (GlcNAc...) asparagine glycan. Residues 44–66 traverse the membrane as a helical segment; that stretch reads PVVYAVICAVGLAGNSAVLFVLL. The Cytoplasmic portion of the chain corresponds to 67 to 75; the sequence is RAPRRKTVT. Residues 76-100 traverse the membrane as a helical segment; sequence NLFILNLAVADELFTLVPPVNIADF. The Extracellular segment spans residues 101–115; it reads LLRRWPFGELLCKLV. Residues cysteine 112 and cysteine 191 are joined by a disulfide bond. Residues 116–135 traverse the membrane as a helical segment; the sequence is VAVDQYNTFSSLYFLTVMSA. Over 136–160 the chain is Cytoplasmic; it reads DRYLVVLATAESRRVAGRTYGAARA. Residues 161 to 180 form a helical membrane-spanning segment; it reads VSLAVWGVATLVVLPFAVFA. The Extracellular segment spans residues 181–205; the sequence is RLDEEQGRRQCVLVFPQPEALWWRA. Residues 206–227 form a helical membrane-spanning segment; that stretch reads SRLYTLVLGFAIPVSTICVLYT. Residues 228-251 lie on the Cytoplasmic side of the membrane; it reads SLLCRLRAIRLDSHAKALDRAKKR. The helical transmembrane segment at 252–276 threads the bilayer; that stretch reads VTVLVVAILAVCLLVWTPYHLSTVV. The Extracellular segment spans residues 277 to 286; sequence ALTTDLPQTP. Residues 287–301 traverse the membrane as a helical segment; that stretch reads LVIAVSYFITSLSYA. Residues 302-331 lie on the Cytoplasmic side of the membrane; sequence NSCLNPFLYAFLDDSFRRSLRQLLACRTTS.

Belongs to the G-protein coupled receptor 1 family.

The protein resides in the cell membrane. Its function is as follows. Interacts specifically with a number of opioid ligands. Receptor for neuropeptides B and W, which may be involved in neuroendocrine system regulation, food intake and the organization of other signals. This is Neuropeptides B/W receptor type 1 (NPBWR1) from Bos taurus (Bovine).